A 265-amino-acid chain; its full sequence is Aquaporin-5 (265 aa).

The Cytoplasmic portion of the chain corresponds to 1 to 12; it reads MKKEVCSVAFFK. The chain crosses the membrane as a helical span at residues 13–33; it reads AVFAEFLATLIFVFFGLGSAL. Over 34-39 the chain is Extracellular; the sequence is KWPSAL. Residues 40 to 60 traverse the membrane as a helical segment; sequence PTILQISIAFGLAIGTLAQAL. At 61 to 65 the chain is on the cytoplasmic side; the sequence is GPVSG. The discontinuously helical intramembrane region spans 66–74; the sequence is GHINPAITL. Residues 69–71 carry the NPA 1 motif; that stretch reads NPA. At 75 to 87 the chain is on the cytoplasmic side; sequence ALLIGNQISLLRA. A helical transmembrane segment spans residues 88–108; that stretch reads IFYVAAQLVGAIAGAGILYWL. The Extracellular portion of the chain corresponds to 109–126; that stretch reads APGNARGNLAVNALSNNT. N-linked (GlcNAc...) asparagine glycosylation is present at Asn-124. Residues 127 to 147 traverse the membrane as a helical segment; the sequence is TPGKAVVVELILTFQLALCIF. The Cytoplasmic segment spans residues 148–158; that stretch reads SSTDSRRTSPV. A helical transmembrane segment spans residues 159-179; it reads GSPALSIGLSVTLGHLVGIYF. A topological domain (extracellular) is located at residue Thr-180. Positions 181–191 form an intramembrane region, discontinuously helical; that stretch reads GCSMNPARSFG. An NPA 2 motif is present at residues 185 to 187; sequence NPA. Over 192–203 the chain is Extracellular; the sequence is PAVVMNRFSPSH. Residues 204 to 224 traverse the membrane as a helical segment; the sequence is WVFWVGPIVGAVLAAILYFYL. Over 225–265 the chain is Cytoplasmic; sequence LFPSSLSLHDRVAVVKGTYEPEEDWEDHREERKKTIELTAH.

The protein belongs to the MIP/aquaporin (TC 1.A.8) family. In terms of assembly, homotetramer; each monomer provides an independent water pore. Interacts with TRPV4; the interaction is probably indirect and regulates TRPV4 activation by hypotonicity. In terms of tissue distribution, detected at the luminal membrane of secretory epithelial cells in hindpaw sweat glands. Detected in acinar cells in salivary glands, in duct cells in lacrimal glands and in lung (at protein level). Detected in lung, parotid, submandibular, sublingual, and lacrimal gland tissues.

It is found in the apical cell membrane. Its subcellular location is the cell membrane. The protein resides in the cytoplasmic vesicle membrane. It carries out the reaction H2O(in) = H2O(out). Aquaporins form homotetrameric transmembrane channels, with each monomer independently mediating water transport across the plasma membrane along its osmotic gradient. Plays an important role in fluid secretion in salivary glands. Required for TRPV4 activation by hypotonicity. Together with TRPV4, controls regulatory volume decrease in salivary epithelial cells. Seems to play a redundant role in water transport in the eye, lung and in sweat glands. This is Aquaporin-5 from Mus musculus (Mouse).